Here is an 88-residue protein sequence, read N- to C-terminus: Small ribosomal subunit protein bS20 (88 aa).

Residues M1–M27 are disordered.

It belongs to the bacterial ribosomal protein bS20 family.

In terms of biological role, binds directly to 16S ribosomal RNA. The protein is Small ribosomal subunit protein bS20 of Shewanella woodyi (strain ATCC 51908 / MS32).